Consider the following 213-residue polypeptide: MAAPAVSGLSRQVRYFSTSVVRPFAKLVRPPVQVYGIEGRYATALYSAASKQKKLEQVEKELLRVAQILKEPKVAASVLNPYVKHSVKVKSLSDIIAKERFSPLTTNLINLLAENGRLSNTQGVVSAFSTMMSVHRGEIPCTVTTASPLEETTLSELKTVLKSFLSQGQILKLEVKTDPSIMGGMIVRIGEKYVDMSAKTKIQKLSKAMREVI.

Residues 1–23 (MAAPAVSGLSRQVRYFSTSVVRP) constitute a mitochondrion transit peptide. Positions 5–23 (AVSGLSRQVRYFSTSVVRP) match the SIFI-degron motif. An N6-acetyllysine mark is found at lysine 54, lysine 60, lysine 70, and lysine 73. Lysine 90 is modified (N6-succinyllysine). N6-acetyllysine; alternate is present on residues lysine 158 and lysine 162. Lysine 158 and lysine 162 each carry N6-succinyllysine; alternate. Residues lysine 172, lysine 176, and lysine 192 each carry the N6-acetyllysine modification. Lysine 199 bears the N6-succinyllysine mark.

Belongs to the ATPase delta chain family. In terms of assembly, component of the ATP synthase complex composed at least of ATP5F1A/subunit alpha, ATP5F1B/subunit beta, ATP5MC1/subunit c (homooctomer), MT-ATP6/subunit a, MT-ATP8/subunit 8, ATP5ME/subunit e, ATP5MF/subunit f, ATP5MG/subunit g, ATP5MK/subunit k, ATP5MJ/subunit j, ATP5F1C/subunit gamma, ATP5F1D/subunit delta, ATP5F1E/subunit epsilon, ATP5PF/subunit F6, ATP5PB/subunit b, ATP5PD/subunit d, ATP5PO/subunit OSCP. ATP synthase complex consists of a soluble F(1) head domain (subunits alpha(3) and beta(3)) - the catalytic core - and a membrane F(0) domain - the membrane proton channel (subunits c, a, 8, e, f, g, k and j). These two domains are linked by a central stalk (subunits gamma, delta, and epsilon) rotating inside the F1 region and a stationary peripheral stalk (subunits F6, b, d, and OSCP). Post-translationally, acetylation at Lys-162 decreases ATP production. Deacetylated by SIRT3. In terms of processing, in response to mitochondrial stress, the precursor protein is ubiquitinated by the SIFI complex in the cytoplasm before mitochondrial import, leading to its degradation. Within the SIFI complex, UBR4 initiates ubiquitin chain that are further elongated or branched by KCMF1.

Its subcellular location is the mitochondrion. The protein resides in the mitochondrion inner membrane. Its function is as follows. Subunit OSCP, of the mitochondrial membrane ATP synthase complex (F(1)F(0) ATP synthase or Complex V) that produces ATP from ADP in the presence of a proton gradient across the membrane which is generated by electron transport complexes of the respiratory chain. ATP synthase complex consist of a soluble F(1) head domain - the catalytic core - and a membrane F(1) domain - the membrane proton channel. These two domains are linked by a central stalk rotating inside the F(1) region and a stationary peripheral stalk. During catalysis, ATP synthesis in the catalytic domain of F(1) is coupled via a rotary mechanism of the central stalk subunits to proton translocation. In vivo, can only synthesize ATP although its ATP hydrolase activity can be activated artificially in vitro. Part of the complex F(0) domain. Part of the complex F(0) domain and the peripheric stalk, which acts as a stator to hold the catalytic alpha(3)beta(3) subcomplex and subunit a/ATP6 static relative to the rotary elements. This is ATP synthase peripheral stalk subunit OSCP, mitochondrial from Plecturocebus moloch (Dusky titi monkey).